We begin with the raw amino-acid sequence, 138 residues long: Transcriptional activator protein Pur-alpha (138 aa).

S70 bears the Phosphoserine mark.

The protein belongs to the PUR DNA-binding protein family. As to quaternary structure, homodimer, heterodimer with PURB and heterotrimer with PURB and YBX1/Y-box protein 1. Interacts with FMR1; this interaction occurs in association with polyribosome.

The protein localises to the nucleus. This is a probable transcription activator that specifically binds the purine-rich single strand of the PUR element located upstream of the c-Myc gene. May play a role in the initiation of DNA replication and in recombination. This chain is Transcriptional activator protein Pur-alpha, found in Rattus norvegicus (Rat).